Reading from the N-terminus, the 518-residue chain is Cytochrome P450 704C1 (518 aa).

Transmembrane regions (helical) follow at residues 5–25 (ILTMFVTVSALALACSLWIAS) and 299–319 (VILNFMVAARDTTAIALSWFI). C461 is a binding site for heme.

Belongs to the cytochrome P450 family. Heme is required as a cofactor.

It is found in the membrane. The chain is Cytochrome P450 704C1 (CYP704C1) from Pinus taeda (Loblolly pine).